The sequence spans 201 residues: MIKLIVGLGNPGAEYTATRHNAGFWLVDQLAREAGATLRDERRFHGFYAKARLYGEEVHLLEPQTYMNRSGQSVVALAHFFKILPNEILVAHDELDLPPGAVKLKLGGGSGGHNGLKDISAHLSSQQYWRLRIGIGHPRDMIPESARAGAKPDVANFVLKPPRKEEQDVIDAAIERALAVMPAVVKGETERAMMQLHRNGA.

A tRNA-binding site is contributed by Tyr15. The Proton acceptor role is filled by His20. TRNA is bound by residues Tyr66, Asn68, and Asn114.

It belongs to the PTH family. As to quaternary structure, monomer.

It is found in the cytoplasm. It carries out the reaction an N-acyl-L-alpha-aminoacyl-tRNA + H2O = an N-acyl-L-amino acid + a tRNA + H(+). Its function is as follows. Hydrolyzes ribosome-free peptidyl-tRNAs (with 1 or more amino acids incorporated), which drop off the ribosome during protein synthesis, or as a result of ribosome stalling. Catalyzes the release of premature peptidyl moieties from peptidyl-tRNA molecules trapped in stalled 50S ribosomal subunits, and thus maintains levels of free tRNAs and 50S ribosomes. The chain is Peptidyl-tRNA hydrolase from Burkholderia thailandensis (strain ATCC 700388 / DSM 13276 / CCUG 48851 / CIP 106301 / E264).